The primary structure comprises 425 residues: MTTVIKNGTVYQNGHLIKADVLIDGQKIKAIGTDLEGEEIIDASGMIVSPGLVDVHVHYRDPGQTYKEDIKTGSQAAARGGFTTVGAMPNVTPVPNTAELMDKMVRENQKKGLVHILQYGPVTNDETTDIIPDYAALKKAGAFALSNDGHGVQSAQTMYLAMQKAKENNLIIAAHAQDDSLFNKGIVNEGIAAEKLDLPPVTELAETTQIARDLLLAQKTGVHYHICHVSTKTSVELVRLAKARGIKVTCEVAPHHILLTDSDIPEDNAYFKMNPPLRSKEDQVALLVGLLDGTIDLIATDHAPHAKAEKQGGMRGAAFGITGSETAFSTLYTRFVKEEKVFTLEQLLSLLTDKPATVFGIENAGLLAPGENADIAIFDIEHQREIKEDDFKSKGVNTPFTGHKVYGETVMTFVDGKVVYQRGTK.

Zn(2+) contacts are provided by H56 and H58. Substrate contacts are provided by residues 58-60 and N90; that span reads HYR. Zn(2+) is bound by residues D148, H175, and H228. N274 provides a ligand contact to substrate. Residue D301 participates in Zn(2+) binding. The active site involves D301. Substrate contacts are provided by residues H305 and 319–320; that span reads FG.

The protein belongs to the metallo-dependent hydrolases superfamily. DHOase family. Class I DHOase subfamily. Requires Zn(2+) as cofactor.

It carries out the reaction (S)-dihydroorotate + H2O = N-carbamoyl-L-aspartate + H(+). It participates in pyrimidine metabolism; UMP biosynthesis via de novo pathway; (S)-dihydroorotate from bicarbonate: step 3/3. Functionally, catalyzes the reversible cyclization of carbamoyl aspartate to dihydroorotate. The polypeptide is Dihydroorotase (Lactobacillus johnsonii (strain CNCM I-12250 / La1 / NCC 533)).